We begin with the raw amino-acid sequence, 409 residues long: Tryptophan synthase beta chain (409 aa).

At Lys-92 the chain carries N6-(pyridoxal phosphate)lysine.

Belongs to the TrpB family. In terms of assembly, tetramer of two alpha and two beta chains. It depends on pyridoxal 5'-phosphate as a cofactor.

The catalysed reaction is (1S,2R)-1-C-(indol-3-yl)glycerol 3-phosphate + L-serine = D-glyceraldehyde 3-phosphate + L-tryptophan + H2O. It functions in the pathway amino-acid biosynthesis; L-tryptophan biosynthesis; L-tryptophan from chorismate: step 5/5. In terms of biological role, the beta subunit is responsible for the synthesis of L-tryptophan from indole and L-serine. The sequence is that of Tryptophan synthase beta chain (trpB) from Methanococcus voltae.